Here is an 89-residue protein sequence, read N- to C-terminus: Small ribosomal subunit protein uS15 (89 aa).

Belongs to the universal ribosomal protein uS15 family. As to quaternary structure, part of the 30S ribosomal subunit. Forms a bridge to the 50S subunit in the 70S ribosome, contacting the 23S rRNA.

Its function is as follows. One of the primary rRNA binding proteins, it binds directly to 16S rRNA where it helps nucleate assembly of the platform of the 30S subunit by binding and bridging several RNA helices of the 16S rRNA. Functionally, forms an intersubunit bridge (bridge B4) with the 23S rRNA of the 50S subunit in the ribosome. This Parabacteroides distasonis (strain ATCC 8503 / DSM 20701 / CIP 104284 / JCM 5825 / NCTC 11152) protein is Small ribosomal subunit protein uS15.